Consider the following 35-residue polypeptide: Phospholipase A2 neuwieditoxin-1 (35 aa).

Residues Tyr27, Gly29, and Gly31 each coordinate Ca(2+).

This sequence belongs to the phospholipase A2 family. Group II subfamily. D49 sub-subfamily. As to quaternary structure, dimer. Requires Ca(2+) as cofactor. As to expression, expressed by the venom gland.

It is found in the secreted. It carries out the reaction a 1,2-diacyl-sn-glycero-3-phosphocholine + H2O = a 1-acyl-sn-glycero-3-phosphocholine + a fatty acid + H(+). Snake venom phospholipase A2 (PLA2) that shows presynaptic neurotoxicity. 10 ug/ml of this protein produce complete neuromuscular blockade up to 80 minutes, without inhibiting the responses to acetylcholine (ACh) and potassium chloride (KCl). In addition, it produces a calcium-dependent blockade of acetylcholine release and causes appearance of giant miniature end-plate potentials. PLA2 catalyzes the calcium-dependent hydrolysis of the 2-acyl groups in 3-sn-phosphoglycerides. The chain is Phospholipase A2 neuwieditoxin-1 from Bothrops pauloensis (Neuwied's lancehead).